The sequence spans 242 residues: ATP synthase subunit a (242 aa).

6 helical membrane passes run 31–51 (IYML…FYNW), 84–104 (FIPL…LGMT), 114–134 (IIVT…VGFV), 140–160 (FLTL…MIVI), 189–209 (VIAS…IPLM), and 210–230 (VILI…FTIL).

The protein belongs to the ATPase A chain family. As to quaternary structure, F-type ATPases have 2 components, CF(1) - the catalytic core - and CF(0) - the membrane proton channel. CF(1) has five subunits: alpha(3), beta(3), gamma(1), delta(1), epsilon(1). CF(0) has three main subunits: a(1), b(2) and c(9-12). The alpha and beta chains form an alternating ring which encloses part of the gamma chain. CF(1) is attached to CF(0) by a central stalk formed by the gamma and epsilon chains, while a peripheral stalk is formed by the delta and b chains.

It localises to the cell inner membrane. In terms of biological role, key component of the proton channel; it plays a direct role in the translocation of protons across the membrane. In Rickettsia canadensis (strain McKiel), this protein is ATP synthase subunit a.